Reading from the N-terminus, the 232-residue chain is Large ribosomal subunit protein uL1 (232 aa).

This sequence belongs to the universal ribosomal protein uL1 family. In terms of assembly, part of the 50S ribosomal subunit.

In terms of biological role, binds directly to 23S rRNA. The L1 stalk is quite mobile in the ribosome, and is involved in E site tRNA release. Functionally, protein L1 is also a translational repressor protein, it controls the translation of the L11 operon by binding to its mRNA. This Bacteroides fragilis (strain ATCC 25285 / DSM 2151 / CCUG 4856 / JCM 11019 / LMG 10263 / NCTC 9343 / Onslow / VPI 2553 / EN-2) protein is Large ribosomal subunit protein uL1.